A 1016-amino-acid polypeptide reads, in one-letter code: Primary septum glucan endo-1,3-beta-D-glucosidase (1016 aa).

The first 20 residues, 1–20 (MSSYLRSFIFGLLTISLAQC), serve as a signal peptide directing secretion. N-linked (GlcNAc...) asparagine glycosylation occurs at Asn-37. The beta-sandwich subdomain stretch occupies residues 45 to 272 (TNVFDSVVDT…NGYIQIAKIP (228 aa)). In terms of domain architecture, GH81 spans 45-741 (TNVFDSVVDT…AYAAGLWAND (697 aa)). The tract at residues 273–364 (LGDGTAEALY…AGNSITFAEA (92 aa)) is alpha/beta subdomain. Residues 379 to 741 (GQIGYSEEAL…AYAAGLWAND (363 aa)) form a (alpha/beta)6 barrel subdomain region. Asp-492 is a catalytic residue. Residues His-496, Asp-567, Glu-569, Glu-573, and Tyr-650 each contribute to the (1,3-beta-D-glucosyl)n site. Residues Glu-569 and Glu-573 contribute to the active site. Residues 748-1016 (SSSSTTTTST…GCSNGALVAA (269 aa)) are required for catalytic activity against insoluble beta-glucan and to restrict localization of the enzyme to the cell septum. Residues 844-872 (SSTTSSITPTPTTTSSITPTPTTTSTTTT) are disordered.

It belongs to the glycosyl hydrolase 81 family.

It localises to the cell septum. It catalyses the reaction Hydrolysis of (1-&gt;3)-beta-D-glucosidic linkages in (1-&gt;3)-beta-D-glucans.. Functionally, cleaves internal linkages in 1,3-beta-glucan. Has a role in cell separation where it is required for the degradation of the primary septum after completion of cytokinesis. This is Primary septum glucan endo-1,3-beta-D-glucosidase from Schizosaccharomyces pombe (strain 972 / ATCC 24843) (Fission yeast).